The chain runs to 260 residues: UPF0246 protein Veis_4789 (260 aa).

It belongs to the UPF0246 family.

This is UPF0246 protein Veis_4789 from Verminephrobacter eiseniae (strain EF01-2).